Reading from the N-terminus, the 492-residue chain is N-succinylglutamate 5-semialdehyde dehydrogenase (492 aa).

220 to 225 lines the NAD(+) pocket; it reads GSANTG. Residues Glu243 and Cys277 contribute to the active site.

It belongs to the aldehyde dehydrogenase family. AstD subfamily.

The enzyme catalyses N-succinyl-L-glutamate 5-semialdehyde + NAD(+) + H2O = N-succinyl-L-glutamate + NADH + 2 H(+). It participates in amino-acid degradation; L-arginine degradation via AST pathway; L-glutamate and succinate from L-arginine: step 4/5. Functionally, catalyzes the NAD-dependent reduction of succinylglutamate semialdehyde into succinylglutamate. This Escherichia coli (strain SE11) protein is N-succinylglutamate 5-semialdehyde dehydrogenase.